The following is a 64-amino-acid chain: Ferredoxin-2 (64 aa).

In terms of domain architecture, 4Fe-4S ferredoxin-type spans Arg2–Glu29. Positions 10, 16, and 55 each coordinate [3Fe-4S] cluster.

It depends on [3Fe-4S] cluster as a cofactor.

Its function is as follows. Electron transport protein for the cytochrome P-450-SU2 system. This is Ferredoxin-2 (subB) from Streptomyces griseolus.